The sequence spans 405 residues: POC1 centriolar protein homolog A (405 aa).

WD repeat units lie at residues 17 to 56 (GHRDAVTCVDFSLNTKHLASGSMDSTLMIWHMKPQSRAYR), 59 to 98 (GHKDAVTCVNFSPSGHLLASGSRDKTVRIWVPNVKGESTV), 101 to 140 (AHTATVRSVHFCSDGQSLVTASDDKTVKVWSTHRQRFLFS), 143 to 182 (QHINWVRCAKFSPDGRLIVSASDDKTVKLWDKTSRECIHS), 185 to 224 (EHGGFVTYVDFHPSGTCIAAAGMDNTVKVWDARTHRLLQH), 227 to 266 (LHSAAVNALSFHPSGNYLITASSDSTLKILDLMEGRLLYT), and 269 to 308 (GHQGPATTVAFSRTGEYFASGGSDEQVMVWKSNFDIVDYG). A disordered region spans residues 313–352 (RRPPPLTSSSGTLPKMDLPVPPGRDRSLESVQGEPQESIS). Residues 341–352 (ESVQGEPQESIS) are compositionally biased toward polar residues. Residues 367 to 395 (QLDILTQTVSILEQRLTLTEDRLKQCLEN) are a coiled coil.

It belongs to the WD repeat POC1 family. Interacts with POC1B. As to expression, widely expressed in embryonic and adult tissues.

Its subcellular location is the cytoplasm. The protein localises to the cytoskeleton. The protein resides in the microtubule organizing center. It localises to the centrosome. It is found in the centriole. Its subcellular location is the cilium basal body. The protein localises to the spindle pole. In terms of biological role, plays an important role in centriole assembly and/or stability and ciliogenesis. Involved in early steps of centriole duplication, as well as in the later steps of centriole length control. Acts in concert with POC1B to ensure centriole integrity and proper mitotic spindle formation. This is POC1 centriolar protein homolog A (Poc1a) from Mus musculus (Mouse).